Here is a 333-residue protein sequence, read N- to C-terminus: Fructose-1,6-bisphosphatase class 1 (333 aa).

Residues Glu-92, Asp-113, Leu-115, and Asp-116 each coordinate Mg(2+). Residues 116-119 (DGSS), Asn-209, Tyr-242, and Lys-272 each bind substrate. A Mg(2+)-binding site is contributed by Glu-278.

The protein belongs to the FBPase class 1 family. In terms of assembly, homotetramer. Requires Mg(2+) as cofactor.

The protein resides in the cytoplasm. The catalysed reaction is beta-D-fructose 1,6-bisphosphate + H2O = beta-D-fructose 6-phosphate + phosphate. It participates in carbohydrate biosynthesis; Calvin cycle. This is Fructose-1,6-bisphosphatase class 1 from Chlorobaculum parvum (strain DSM 263 / NCIMB 8327) (Chlorobium vibrioforme subsp. thiosulfatophilum).